A 135-amino-acid chain; its full sequence is Small ribosomal subunit protein uS11 (135 aa).

Residues 1–11 (MPPKARAGAAV) show a composition bias toward low complexity. A disordered region spans residues 1–22 (MPPKARAGAAVKKVRRKERKNV).

The protein belongs to the universal ribosomal protein uS11 family. Part of the 30S ribosomal subunit. Interacts with proteins S7 and S18. Binds to IF-3.

Functionally, located on the platform of the 30S subunit, it bridges several disparate RNA helices of the 16S rRNA. Forms part of the Shine-Dalgarno cleft in the 70S ribosome. The polypeptide is Small ribosomal subunit protein uS11 (Salinispora tropica (strain ATCC BAA-916 / DSM 44818 / JCM 13857 / NBRC 105044 / CNB-440)).